A 531-amino-acid chain; its full sequence is Pancreatic secretory granule membrane major glycoprotein GP2 (531 aa).

The first 21 residues, 1 to 21, serve as a signal peptide directing secretion; it reads MVGCDLLWLAAASCVLTLVSP. The N-linked (GlcNAc...) asparagine glycan is linked to asparagine 33. The beta hairpin stretch occupies residues 34-53; the sequence is SSNLDLDCGSPDSPSSGICF. Intrachain disulfides connect cysteine 41–cysteine 52, cysteine 56–cysteine 151, cysteine 79–cysteine 169, cysteine 101–cysteine 139, cysteine 107–cysteine 174, cysteine 132–cysteine 140, cysteine 184–cysteine 194, cysteine 188–cysteine 203, cysteine 205–cysteine 235, cysteine 223–cysteine 314, and cysteine 255–cysteine 278. Residues 54–74 form a D10C region; it reads DPCQNHTVLNDPTRSTENNDS. Asparagine 58 and asparagine 72 each carry an N-linked (GlcNAc...) asparagine glycan. Positions 180 to 224 constitute an EGF-like domain; that stretch reads APKNCEITCRPEEECVFQNNNWSCVCRQDLHVSDSQSLQPLLDCG. N-linked (GlcNAc...) asparagine glycosylation is present at asparagine 200. The interval 222–315 is ZP-N; that stretch reads DCGDNEIKVK…FRVNVNFQCA (94 aa). Residues 222–478 enclose the ZP domain; that stretch reads DCGDNEIKVK…PSCSTNRLRS (257 aa). Residues asparagine 256 and asparagine 285 are each glycosylated (N-linked (GlcNAc...) asparagine). Positions 316 to 339 are flexible ZP-N/ZP-C linker; sequence YPLDMSVSLETALQPIVSSLTVDV. The tract at residues 340–351 is internal hydrophobic patch (IHP); that stretch reads DGAGEFNVKMAL. Positions 340–478 are ZP-C; sequence DGAGEFNVKM…PSCSTNRLRS (139 aa). 3 disulfides stabilise this stretch: cysteine 395/cysteine 455, cysteine 416/cysteine 471, and cysteine 460/cysteine 467. Positions 485-493 are external hydrophobic patch (EHP); that stretch reads YNRVLDLGP.

As to quaternary structure, interacts with SYCN. Interacts with bacterial adhesin fimH. Post-translationally, N-glycosylated. As to expression, specifically expressed by M (microfold) cells which are atypical epithelial cells of the intestine.

The protein localises to the zymogen granule membrane. Its subcellular location is the secreted. It is found in the cell membrane. The protein resides in the apical cell membrane. It localises to the membrane raft. The protein localises to the endosome. In terms of biological role, functions as an intestinal M-cell transcytotic receptor specific of type-I-piliated bacteria that participates in the mucosal immune response toward these bacteria. At the apical membrane of M-cells it binds fimH, a protein of the bacteria type I pilus tip. Internalizes bound bacteria, like E.coli and S.typhimurium, from the lumen of the intestine and delivers them, through M-cells, to the underlying organized lymphoid follicles where they are captured by antigen-presenting dendritic cells to elicit a mucosal immune response. This is Pancreatic secretory granule membrane major glycoprotein GP2 from Mus musculus (Mouse).